Consider the following 690-residue polypeptide: Glutaminase A (690 aa).

An N-terminal signal peptide occupies residues 1-20 (MMHFLSFCLSVASLVSYAGA). Residues N80, N96, N435, N508, N528, N538, and N571 are each glycosylated (N-linked (GlcNAc...) asparagine).

It belongs to the fungal glutaminase gtaA family.

The protein resides in the secreted. The catalysed reaction is L-glutamine + H2O = L-glutamate + NH4(+). Activity is inhibited by about 80% in the presence of 18% sodium chloride. Its function is as follows. Glutaminase catalyzes the hydrolysis of glutamine to glutamic acid and plays a key role in nitrogen metabolism. Catalyzes the hydrolysis not only of L-glutamine but also of D-glutamine. This chain is Glutaminase A, found in Aspergillus oryzae (strain ATCC 42149 / RIB 40) (Yellow koji mold).